The chain runs to 322 residues: Transmembrane protein 171 (322 aa).

4 helical membrane passes run 22-42, 57-77, 112-132, and 159-179; these read IFFL…LSIF, IVLK…VILA, LIFG…GIWV, and FLSL…FFVV. Residues 223–322 form a disordered region; that stretch reads PPPYFPESSA…LGAPSDASPP (100 aa). Low complexity predominate over residues 228 to 241; sequence PESSAAAPSPGANS. 2 stretches are compositionally biased toward polar residues: residues 242–267 and 279–289; these read LHQI…NQGA and ISGQGSSSERS.

The protein resides in the membrane. This chain is Transmembrane protein 171 (Tmem171), found in Mus musculus (Mouse).